Consider the following 467-residue polypeptide: Serine/threonine-protein phosphatase 2A 56 kDa regulatory subunit epsilon isoform (467 aa).

A disordered region spans residues 1 to 40; that stretch reads MSSAPTTPPSVDKVDGFSRKSVRKARQKRSQSSSQFRSQG. At Ser2 the chain carries N-acetylserine. Thr7 carries the phosphothreonine modification. The span at 20 to 29 shows a compositional bias: basic residues; the sequence is KSVRKARQKR. Residues Ser30, Ser32, and Ser34 each carry the phosphoserine modification. The span at 30–40 shows a compositional bias: low complexity; sequence SQSSSQFRSQG.

The protein belongs to the phosphatase 2A regulatory subunit B56 family. As to quaternary structure, found in a complex with at least ARL2, PPP2CB; PPP2R1A, PPP2R2A, PPP2R5E and TBCD. PP2A consists of a common heterodimeric core enzyme, composed of a 36 kDa catalytic subunit (subunit C) and a 65 kDa constant regulatory subunit (PR65 or subunit A), that associates with a variety of regulatory subunits. Proteins that associate with the core dimer include three families of regulatory subunits B (the R2/B/PR55/B55, R3/B''/PR72/PR130/PR59 and R5/B'/B56 families), the 48 kDa variable regulatory subunit, viral proteins, and cell signaling molecules. Interacts with SGO1. Phosphorylated on serine residues.

The protein resides in the cytoplasm. In terms of biological role, the B regulatory subunit might modulate substrate selectivity and catalytic activity, and might also direct the localization of the catalytic enzyme to a particular subcellular compartment. This is Serine/threonine-protein phosphatase 2A 56 kDa regulatory subunit epsilon isoform (PPP2R5E) from Homo sapiens (Human).